The sequence spans 215 residues: MVRIFLLYNILNSFLLSLVPKKLRTLFPLSWFDKTLHKNSPPSPSTMLPSPSSSSAPTKRIDPSELKRVFQMFDKNGDGRITKEELNDSLENLGIYIPDKDLTQMIHKIDANGDGCVDIDEFESLYSSIVDEHHNDGETEEEDMKDAFNVFDQDGDGFITVEELKSVMASLGLKQGKTLDGCKKMIMQVDADGDGRVNYKEFLQMMKGGGFSSSN.

Residues 38-61 form a disordered region; the sequence is KNSPPSPSTMLPSPSSSSAPTKRI. A compositionally biased stretch (low complexity) spans 45 to 57; the sequence is STMLPSPSSSSAP. 4 EF-hand domains span residues 61-96, 97-132, 139-174, and 177-212; these read IDPSELKRVFQMFDKNGDGRITKEELNDSLENLGIY, IPDKDLTQMIHKIDANGDGCVDIDEFESLYSSIVDE, TEEEDMKDAFNVFDQDGDGFITVEELKSVMASLGLK, and KTLDGCKKMIMQVDADGDGRVNYKEFLQMMKGGGFS. Residues Asp74, Asn76, Asp78, Arg80, Glu85, Asp110, Asn112, Asp114, Cys116, Glu121, Asp152, Asp154, Asp156, Glu163, Asp190, Asp192, Asp194, Arg196, and Glu201 each coordinate Ca(2+).

Belongs to the calmodulin family.

Functionally, potential calcium sensor. The protein is Calmodulin-like protein 5 (CML5) of Arabidopsis thaliana (Mouse-ear cress).